Here is a 189-residue protein sequence, read N- to C-terminus: Probable nicotinate-nucleotide adenylyltransferase (189 aa).

Belongs to the NadD family.

The catalysed reaction is nicotinate beta-D-ribonucleotide + ATP + H(+) = deamido-NAD(+) + diphosphate. The protein operates within cofactor biosynthesis; NAD(+) biosynthesis; deamido-NAD(+) from nicotinate D-ribonucleotide: step 1/1. In terms of biological role, catalyzes the reversible adenylation of nicotinate mononucleotide (NaMN) to nicotinic acid adenine dinucleotide (NaAD). The sequence is that of Probable nicotinate-nucleotide adenylyltransferase from Exiguobacterium sibiricum (strain DSM 17290 / CCUG 55495 / CIP 109462 / JCM 13490 / 255-15).